The sequence spans 192 residues: SPbeta prophage-derived uncharacterized protein YokK (192 aa).

In Bacillus subtilis (strain 168), this protein is SPbeta prophage-derived uncharacterized protein YokK (yokK).